The chain runs to 448 residues: MSFTPGKQSSSRASSGNRSGNGILKWADQSDQVRNVQTRGRRAQPKQTATSQQPSGGNVVPYYSWFSGITQFQKGKEFEFVEGQGPPIAPGVPATEAKGYWYRHNRGSFKTADGNQRQLLPRWYFYYLGTGPHAKDQYGTDIDGVYWVASNQADVNTPADIVDRDPSSDEAIPTRFPPGTVLPQGYYIEGSGRSAPNSRSTSRTSSRASSAGSRSRANSGNRTPTSGVTPDMADQIASLVLAKLGKDATKPQQVTKHTAKEVRQKILNKPRQKRSPNKQCTVQQCFGKRGPNQNFGGGEMLKLGTSDPQFPILAELAPTAGAFFFGSRLELAKVQNLSGNPDEPQKDVYELRYNGAIRFDSTLSGFETIMKVLNENLNAYQQQDGMMNMSPKPQRQRGHKNGQGENDNISVAVPKSRVQQNKSRELTAEDISLLKKMDEPYTEDTSEI.

Residues 1 to 55 (MSFTPGKQSSSRASSGNRSGNGILKWADQSDQVRNVQTRGRRAQPKQTATSQQPS) are disordered. Positions 9-22 (SSSRASSGNRSGNG) are enriched in low complexity. Polar residues-rich tracts occupy residues 29–38 (QSDQVRNVQT) and 45–55 (PKQTATSQQPS). The tract at residues 52-194 (QQPSGGNVVP…GYYIEGSGRS (143 aa)) is RNA-binding. In terms of domain architecture, CoV N NTD spans 61-190 (PYYSWFSGIT…VLPQGYYIEG (130 aa)). Residues R106, R122, and R164 each contribute to the RNA site. Disordered stretches follow at residues 158-231 (PADI…VTPD), 266-293 (ILNKPRQKRSPNKQCTVQQCFGKRGPNQ), and 385-448 (GMMN…TSEI). Phosphoserine; by host is present on S167. T174 bears the Phosphothreonine; by host mark. S191 carries the post-translational modification Phosphoserine; by host. Over residues 193 to 223 (RSAPNSRSTSRTSSRASSAGSRSRANSGNRT) the composition is skewed to low complexity. Residues 259 to 384 (AKEVRQKILN…ENLNAYQQQD (126 aa)) enclose the CoV N CTD domain. The span at 266 to 276 (ILNKPRQKRSP) shows a compositional bias: basic residues. A dimerization region spans residues 266–384 (ILNKPRQKRS…ENLNAYQQQD (119 aa)). A phosphoserine; by host mark is found at S390 and S423. A compositionally biased stretch (basic and acidic residues) spans 422-439 (KSRELTAEDISLLKKMDE). At T427 the chain carries Phosphothreonine; by host.

It belongs to the betacoronavirus nucleocapsid protein family. As to quaternary structure, homooligomer. Both monomeric and oligomeric forms interact with RNA. Interacts with protein M. Interacts with NSP3; this interaction serves to tether the genome to the newly translated replicase-transcriptase complex at a very early stage of infection. In terms of processing, ADP-ribosylated. The ADP-ribosylation is retained in the virion during infection. Phosphorylated on serine and threonine residues. Post-translationally, proteolytically cleaved by host CASP6. The cleavage leads to two fragments and facilitates viral replication by inhibiting host IFN signaling. The two fragments may interact with IRF3 inhibiting its nuclear translocation after activation and reduce the expression of IFNB and IFN-stimulated genes.

It localises to the virion. The protein localises to the host endoplasmic reticulum-Golgi intermediate compartment. Its subcellular location is the host Golgi apparatus. Functionally, packages the positive strand viral genome RNA into a helical ribonucleocapsid (RNP) and plays a fundamental role during virion assembly through its interactions with the viral genome and membrane protein M. Plays an important role in enhancing the efficiency of subgenomic viral RNA transcription as well as viral replication. Attenuates the stress granules formation by reducing host G3BP1 access to host mRNAs under stress conditions. The chain is Nucleoprotein from Homo sapiens (Human).